We begin with the raw amino-acid sequence, 162 residues long: uncharacterized protein (162 aa).

Pentapeptide repeat domains lie at 33-72 (ASLIGAQLIFVDLGGANLTRAQLDSATLKNANLALANMTE), 73-112 (VCLIYADLSNADLSGANLVGADLTNADLSGAKLGGADLRK), and 113-152 (ANLSEASLRGADLRGVNLIEANLTNTDFSEADLTGAYISD).

This is an uncharacterized protein from Synechocystis sp. (strain ATCC 27184 / PCC 6803 / Kazusa).